Reading from the N-terminus, the 355-residue chain is D-alanine--D-alanine ligase (355 aa).

In terms of domain architecture, ATP-grasp spans 143-350 (KKIFSHLEIP…IDQLVAKLVD (208 aa)). 178–233 (IEKLKLPVFVKPANSGSSLGISKAKTRSEIIKALQKAWEIDSRIVIEEGLDVRELE) is an ATP binding site. Mg(2+)-binding residues include D303, E317, and N319.

Belongs to the D-alanine--D-alanine ligase family. Mg(2+) is required as a cofactor. The cofactor is Mn(2+).

The protein localises to the cytoplasm. The enzyme catalyses 2 D-alanine + ATP = D-alanyl-D-alanine + ADP + phosphate + H(+). It participates in cell wall biogenesis; peptidoglycan biosynthesis. Cell wall formation. The chain is D-alanine--D-alanine ligase from Prochlorococcus marinus subsp. pastoris (strain CCMP1986 / NIES-2087 / MED4).